Reading from the N-terminus, the 184-residue chain is Uroplakin-2 (184 aa).

The first 25 residues, 1–25, serve as a signal peptide directing secretion; sequence MASTLPVQTLPLILILLAVLAPGTA. Positions 26–84 are excised as a propeptide; that stretch reads DFNISSLSGLLSPALTESLLIALPPCHLTGGNATLMVRRANDSKVVKSDFVVPPCRGRR. 3 N-linked (GlcNAc...) asparagine glycosylation sites follow: N28, N57, and N66. Over 85-155 the chain is Lumenal; it reads ELVSVVDSGS…IGLGMARTGG (71 aa). A helical transmembrane segment spans residues 156–180; that stretch reads MVVITVLLSVAMFLLVVGLIVALHW. Residues 181–184 lie on the Cytoplasmic side of the membrane; sequence DARK.

The protein belongs to the uroplakin-2 family. As to quaternary structure, interacts with uroplakin-1a (UPK1A).

The protein resides in the cell membrane. Its function is as follows. Component of the asymmetric unit membrane (AUM); a highly specialized biomembrane elaborated by terminally differentiated urothelial cells. May play an important role in regulating the assembly of the AUM. In Mus musculus (Mouse), this protein is Uroplakin-2 (Upk2).